Reading from the N-terminus, the 954-residue chain is Calsyntenin-1 (954 aa).

The N-terminal stretch at 1-25 (MRIRGVKPFASAVGLLLGLLYAVDA) is a signal peptide. Over 26-833 (AKVNKHKPWI…THQASVVPSA (808 aa)) the chain is Extracellular. Cadherin domains are found at residues 35–151 (IETT…SPVF) and 152–252 (KEKS…KPSW). 3 N-linked (GlcNAc...) asparagine glycosylation sites follow: N333, N353, and N552. The helical transmembrane segment at 834–854 (ATIVIVVCVSFLVFMIILGVF) threads the bilayer. Topologically, residues 855-954 (RIRAAHQRTM…LEWDDSTLTY (100 aa)) are cytoplasmic. Positions 891–954 (TYEDQHSSEE…LEWDDSTLTY (64 aa)) are disordered. Positions 900 to 935 (EEGDEEEEESEDGEEEDDITSAESDSSEDEAGEQED) are enriched in acidic residues.

The protein belongs to the calsyntenin family. As to quaternary structure, homooligomer and heterooligomer; mediates both homophilic and heterophilc interactions with clstn2 and clstn3 paralogs via cadherin domains. By 48 hours post-fertilization (hpf), widely expressed in the brain, with strong expression in the telencephalon and the midbrain.

The protein localises to the postsynaptic cell membrane. It is found in the endoplasmic reticulum membrane. It localises to the golgi apparatus membrane. Its subcellular location is the cell projection. The protein resides in the neuron projection. Its function is as follows. Postsynaptic adhesion molecule involved in vesicle trafficking; required for branching of peripheral but not central axons of sensory neurons. Promotes synapse development by acting as a cell adhesion molecule at the postsynaptic membrane, which associates with presynaptic neurexins. This Danio rerio (Zebrafish) protein is Calsyntenin-1.